A 507-amino-acid polypeptide reads, in one-letter code: Cytochrome c-552 (507 aa).

The first 22 residues, 1–22 (MTKFKLLLAGSLVAIVSMGLLA), serve as a signal peptide directing secretion. Positions 102, 130, 133, 134, 168, 171, 172, 211, 214, and 215 each coordinate heme c. The Ca(2+) site is built by E217, Y218, K274, and Q276. A substrate-binding site is contributed by Y218. H277 is a binding site for substrate. Residues H288, C295, C298, H299, H313, C326, C329, H330, and H405 each coordinate heme c.

The protein belongs to the cytochrome c-552 family. In terms of assembly, homodimer. Interacts with NrfH. May form a heterotetramer with NrfH. The cofactor is Ca(2+). It depends on heme c as a cofactor.

Its subcellular location is the periplasm. The enzyme catalyses 6 Fe(III)-[cytochrome c] + NH4(+) + 2 H2O = 6 Fe(II)-[cytochrome c] + nitrite + 8 H(+). It participates in nitrogen metabolism; nitrate reduction (assimilation). Catalyzes the reduction of nitrite to ammonia, consuming six electrons in the process. Has very low activity toward hydroxylamine, and even lower activity toward sulfite. Sulfite reductase activity is maximal at neutral pH. In Wolinella succinogenes (strain ATCC 29543 / DSM 1740 / CCUG 13145 / JCM 31913 / LMG 7466 / NCTC 11488 / FDC 602W) (Vibrio succinogenes), this protein is Cytochrome c-552 (nrfA).